The primary structure comprises 596 residues: MAANSTSDLHTPGTQLSVADIIVITVYFALNVAVGIWSSCRASRNTVNGYFLAGRDMTWWPIGASLFASSEGSGLFIGLAGSGAAGGLAVAGFEWNATYVLLALAWVFVPIYISSEIVTLPEYIQKRYGGQRIRMYLSVLSLLLSVFTKISLDLYAGALFVHICLGWNFYLSTILTLGITALYTIAGGLAAVIYTDALQTLIMVVGAVILTIKAFDQIGGYGQLEAAYAQAIPSRTIANTTCHLPRTDAMHMFRDPHTGDLPWTGMTFGLTIMATWYWCTDQVIVQRSLSARDLNHAKAGSILASYLKMLPMGLIIMPGMISRALFPDDVGCVVPSECLRACGAEVGCSNIAYPKLVMELMPIGLRGLMIAVMLAALMSSLTSIFNSSSTLFTMDIWRRLRPRSGERELLLVGRLVIVALIGVSVAWIPVLQDSNSGQLFIYMQSVTSSLAPPVTAVFVLGVFWRRANEQGAFWGLIAGLVVGATRLVLEFLNPAPPCGEPDTRPAVLGSIHYLHFAVALFALSGAVVVAGSLLTPPPQSVQIENLTWWTLAQDVPLGTKAGDGQTPQKHAFWARVCGFNAILLMCVNIFFYAYFA.

Topologically, residues 1–15 (MAANSTSDLHTPGTQ) are extracellular. Residue Asn-4 is glycosylated (N-linked (GlcNAc...) asparagine). The helical transmembrane segment at 16–36 (LSVADIIVITVYFALNVAVGI) threads the bilayer. Residues 37 to 72 (WSSCRASRNTVNGYFLAGRDMTWWPIGASLFASSEG) are Cytoplasmic-facing. Residues 73 to 93 (SGLFIGLAGSGAAGGLAVAGF) form a helical membrane-spanning segment. At 94–99 (EWNATY) the chain is on the extracellular side. A glycan (N-linked (GlcNAc...) asparagine) is linked at Asn-96. Residues 100-120 (VLLALAWVFVPIYISSEIVTL) traverse the membrane as a helical segment. At 121–149 (PEYIQKRYGGQRIRMYLSVLSLLLSVFTK) the chain is on the cytoplasmic side. Phosphoserine is present on residues Ser-141 and Ser-145. Thr-148 is modified (phosphothreonine). Residues 150–170 (ISLDLYAGALFVHICLGWNFY) traverse the membrane as a helical segment. Residues 171–173 (LST) are Extracellular-facing. A helical transmembrane segment spans residues 174-194 (ILTLGITALYTIAGGLAAVIY). Residues 195–200 (TDALQT) are Cytoplasmic-facing. Residues 201–221 (LIMVVGAVILTIKAFDQIGGY) form a helical membrane-spanning segment. The Extracellular portion of the chain corresponds to 222-264 (GQLEAAYAQAIPSRTIANTTCHLPRTDAMHMFRDPHTGDLPWT). Residues 265-285 (GMTFGLTIMATWYWCTDQVIV) form a helical membrane-spanning segment. The Cytoplasmic segment spans residues 286-300 (QRSLSARDLNHAKAG). A helical membrane pass occupies residues 301-321 (SILASYLKMLPMGLIIMPGMI). Residues 322–355 (SRALFPDDVGCVVPSECLRACGAEVGCSNIAYPK) are Extracellular-facing. Residues 356-376 (LVMELMPIGLRGLMIAVMLAA) traverse the membrane as a helical segment. Residues 377–409 (LMSSLTSIFNSSSTLFTMDIWRRLRPRSGEREL) are Cytoplasmic-facing. Residues 410 to 430 (LLVGRLVIVALIGVSVAWIPV) traverse the membrane as a helical segment. Topologically, residues 431–443 (LQDSNSGQLFIYM) are extracellular. A helical membrane pass occupies residues 444–464 (QSVTSSLAPPVTAVFVLGVFW). At 465–471 (RRANEQG) the chain is on the cytoplasmic side. The helical transmembrane segment at 472–492 (AFWGLIAGLVVGATRLVLEFL) threads the bilayer. Topologically, residues 493-513 (NPAPPCGEPDTRPAVLGSIHY) are extracellular. The helical transmembrane segment at 514-534 (LHFAVALFALSGAVVVAGSLL) threads the bilayer. The Cytoplasmic portion of the chain corresponds to 535-575 (TPPPQSVQIENLTWWTLAQDVPLGTKAGDGQTPQKHAFWAR). A helical transmembrane segment spans residues 576–596 (VCGFNAILLMCVNIFFYAYFA).

The protein belongs to the sodium:solute symporter (SSF) (TC 2.A.21) family. Predominantly expressed at high levels in kidney. Very low expression is detected in testes. In terms of tissue distribution, expressed in kidney. As to expression, the most abundant isoform expressed in kidney.

The protein localises to the apical cell membrane. It carries out the reaction D-mannose(out) + Na(+)(out) = D-mannose(in) + Na(+)(in). The enzyme catalyses D-fructopyranose(out) + Na(+)(out) = D-fructopyranose(in) + Na(+)(in). Inhibited by phlorizin. Electrogenic Na+-coupled sugar symporter that actively transports D-mannose or D-fructose at the plasma membrane, with a Na+ to sugar coupling ratio of 1:1. Transporter activity is driven by a transmembrane Na+ electrochemical gradient set by the Na+/K+ pump. Exclusively recognizes sugar substrates having a pyranose ring with an axial hydroxyl group on carbon 2. Has likely evolved to enable renal reabsorption of D-mannose, an important constituent of oligosaccharide chains of glycoproteins. Contributes to dietary D-fructose reabsorption from glomerular filtrate across the brush border of the kidney. Its function is as follows. Appears to have no transporter activity. The sequence is that of Sodium/mannose cotransporter SLC5A10 (SLC5A10) from Homo sapiens (Human).